The primary structure comprises 202 residues: Glycerol-3-phosphate acyltransferase 1 (202 aa).

The next 5 helical transmembrane spans lie at 8–28 (AGMI…MSTG), 85–105 (LSLT…IWPL), 122–142 (ILVV…FVLA), 146–166 (QFTL…LIMA), and 173–190 (AGLA…RKNI).

Belongs to the PlsY family. As to quaternary structure, probably interacts with PlsX.

It is found in the cell membrane. The enzyme catalyses an acyl phosphate + sn-glycerol 3-phosphate = a 1-acyl-sn-glycero-3-phosphate + phosphate. The protein operates within lipid metabolism; phospholipid metabolism. Functionally, catalyzes the transfer of an acyl group from acyl-phosphate (acyl-PO(4)) to glycerol-3-phosphate (G3P) to form lysophosphatidic acid (LPA). This enzyme utilizes acyl-phosphate as fatty acyl donor, but not acyl-CoA or acyl-ACP. This is Glycerol-3-phosphate acyltransferase 1 from Desulfitobacterium hafniense (strain Y51).